A 154-amino-acid chain; its full sequence is 17.4 kDa class I heat shock protein (154 aa).

The sHSP domain maps to 40–154 (DAAAFAGARI…PDVKSIQITG (115 aa)).

This sequence belongs to the small heat shock protein (HSP20) family. May form oligomeric structures.

The protein localises to the cytoplasm. This Oryza sativa subsp. japonica (Rice) protein is 17.4 kDa class I heat shock protein (HSP17.4).